We begin with the raw amino-acid sequence, 359 residues long: tRNA N6-adenosine threonylcarbamoyltransferase (359 aa).

Fe cation is bound by residues H115 and H119. Substrate is bound by residues 137 to 141 (LVSGG), D170, G183, and N283. D311 contributes to the Fe cation binding site. Positions 328–359 (APDSLDLAPRSRWPLDEKSAPLIGTGRRGAKA) are disordered.

This sequence belongs to the KAE1 / TsaD family. Requires Fe(2+) as cofactor.

It is found in the cytoplasm. It catalyses the reaction L-threonylcarbamoyladenylate + adenosine(37) in tRNA = N(6)-L-threonylcarbamoyladenosine(37) in tRNA + AMP + H(+). In terms of biological role, required for the formation of a threonylcarbamoyl group on adenosine at position 37 (t(6)A37) in tRNAs that read codons beginning with adenine. Is involved in the transfer of the threonylcarbamoyl moiety of threonylcarbamoyl-AMP (TC-AMP) to the N6 group of A37, together with TsaE and TsaB. TsaD likely plays a direct catalytic role in this reaction. The chain is tRNA N6-adenosine threonylcarbamoyltransferase from Brucella anthropi (strain ATCC 49188 / DSM 6882 / CCUG 24695 / JCM 21032 / LMG 3331 / NBRC 15819 / NCTC 12168 / Alc 37) (Ochrobactrum anthropi).